The chain runs to 523 residues: MFS-type transporter R5 (523 aa).

The segment at 19–42 is disordered; sequence QLNEATAQRESATNNPNDSSSIDE. The segment covering 21-38 has biased composition (polar residues); the sequence is NEATAQRESATNNPNDSS. Residues Asn-35, Asn-94, and Asn-143 are each glycosylated (N-linked (GlcNAc...) asparagine). Transmembrane regions (helical) follow at residues 183–203 and 211–231; these read AYLTLGLVMGPALGPLIGGLL and AIFWFLMILGGFFFVLTFTFF. 2 N-linked (GlcNAc...) asparagine glycosylation sites follow: Asn-235 and Asn-250. 6 helical membrane-spanning segments follow: residues 291 to 311, 319 to 339, 381 to 401, 408 to 428, 443 to 463, and 470 to 490; these read FIVCMYGALLFGGYASVISIF, YGYSQVQVGLCYLPFGVGSIL, LTISFPMIFATCGFVVAYGWL, VASVLVIVFLIANVFTGVLIA, ALGAAMNLTRCLMGAGGVAAV, and IGIGYTATATAGVWLAVLPAL.

Belongs to the major facilitator superfamily.

It localises to the membrane. Functionally, MFS-type transporter; part of the gene cluster that mediates the biosynthesis of squalestatin S1 (SQS1, also known as zaragozic acid A), a heavily oxidized fungal polyketide that offers potent cholesterol lowering activity by targeting squalene synthase (SS). The chain is MFS-type transporter R5 from Phoma sp. (strain ATCC 20986 / MF5453).